The sequence spans 734 residues: Origin of replication complex subunit 3 (734 aa).

Disordered stretches follow at residues 1–25 (MAPSGTVADPPQCSTTDSFNSSDTA) and 532–554 (GQRQGLPNSPKKHASRSNSKLEK). Polar residues predominate over residues 12-24 (QCSTTDSFNSSDT).

This sequence belongs to the ORC3 family. As to quaternary structure, component of the origin recognition complex (ORC) composed of at least ORC1 (ORC1A or ORC1B), ORC2, ORC3, ORC4, ORC5 and ORC6. ORC is regulated in a cell-cycle and development dependent manner. It is sequentially assembled at the exit from anaphase of mitosis and disassembled as cells enter S phase. Interacts directly with ORC1A, ORC2, ORC4, ORC5 and ORC6. Follow a cell-cycle regulation with a peak at the G1/S-phase. Mostly expressed in siliques and flowers, and, to a lower exent, in flower buds, leaves, roots and stems.

Its subcellular location is the nucleus. Functionally, component of the origin recognition complex (ORC) that binds origins of replication. DNA-binding is ATP-dependent. The specific DNA sequences that define origins of replication have not been identified yet. In Arabidopsis thaliana (Mouse-ear cress), this protein is Origin of replication complex subunit 3.